The primary structure comprises 580 residues: MVASLLCTVAVAVLAVAAVGGEAGVVEHTFVVHEMNVTHLCNTTKIFVVNGQLPGPTVDVTEGDTVVVHVVNKIPHGLTIHWHGVRQLRSCWADGAGFITECPIPPGSERTYRFNVTDQVGTLWWHAHVTCLRSTINGAFIIRPRDGKYPFPTPVKDVPIIIGEWWELDLVELDRRMRDGNFDDNPLSATINGKLGDLSNCSGIVEESFVLNVKHGESYLLRVINTAFFSEYYFKVAGHTFTVVGADGNYLTPFKTDMVTVAPGEAIDVLMVADAPPAHYHMIVLANQPPEPDPQIPEYISRGLVRYTSADANNNGLPVPMPIMPNQHNTMPSYYFHANLTGLMHPKHRRVPMHVDERIFIILGLGTICRGRKHTCKRQRSLETIELSTMNNVSFTHPYTTALLERYYDGTPEGVYTEDFPVRPPRPYNYTNPALIPPGPLEEVLEPTFKATKLKRFKYNTSVEIIFQSSTLLMSDSNPMHLHGYDVFLLAQGLGSFNAKRDIRKFNYHNPQLRNTILVPRGGWAAVRFITDNPGMWYLHCHFEFHIIMGMATAFIVEDGPTPETSLPPPPPEFKRCDAS.

The signal sequence occupies residues 1 to 23; it reads MVASLLCTVAVAVLAVAAVGGEA. Plastocyanin-like domains follow at residues 31-147 and 156-310; these read VVHE…PRDG and KDVP…YTSA. Residues Asn-36 and Asn-42 are each glycosylated (N-linked (GlcNAc...) asparagine). Residues His-81 and His-83 each contribute to the Cu cation site. The N-linked (GlcNAc...) asparagine glycan is linked to Asn-115. Cu cation contacts are provided by His-126 and His-128. 5 N-linked (GlcNAc...) asparagine glycosylation sites follow: Asn-200, Asn-339, Asn-392, Asn-429, and Asn-460. One can recognise a Plastocyanin-like 3 domain in the interval 419–561; the sequence is DFPVRPPRPY…ATAFIVEDGP (143 aa). Residues Asn-478, His-481, His-483, His-540, Cys-541, His-542, His-546, and Met-551 each contribute to the Cu cation site. The tract at residues 560-580 is disordered; that stretch reads GPTPETSLPPPPPEFKRCDAS.

It belongs to the multicopper oxidase family. Cu cation is required as a cofactor.

The protein resides in the secreted. It is found in the extracellular space. Its subcellular location is the apoplast. It catalyses the reaction 4 hydroquinone + O2 = 4 benzosemiquinone + 2 H2O. Functionally, lignin degradation and detoxification of lignin-derived products. The polypeptide is Laccase-20 (LAC20) (Oryza sativa subsp. indica (Rice)).